We begin with the raw amino-acid sequence, 34 residues long: Photosystem II reaction center protein Y (34 aa).

The Lumenal portion of the chain corresponds to 1-4; that stretch reads MDIR. A helical membrane pass occupies residues 5-23; the sequence is LLIVLLPVLAAASWALYNI. At 24–34 the chain is on the stromal side; the sequence is GRVALQQFRSM.

Belongs to the PsbY family. In terms of assembly, PSII is composed of 1 copy each of membrane proteins PsbA, PsbB, PsbC, PsbD, PsbE, PsbF, PsbH, PsbI, PsbJ, PsbK, PsbL, PsbM, PsbT, PsbX, PsbY, PsbZ, Psb30/Ycf12, at least 3 peripheral proteins of the oxygen-evolving complex and a large number of cofactors. It forms dimeric complexes.

The protein resides in the plastid. It localises to the chloroplast thylakoid membrane. Its function is as follows. Loosely associated component of the core of photosystem II (PSII), it is not always seen in crystals. PSII is a light-driven water plastoquinone oxidoreductase, using light energy to abstract electrons from H(2)O, generating a proton gradient subsequently used for ATP formation. In Gracilaria tenuistipitata var. liui (Red alga), this protein is Photosystem II reaction center protein Y.